The following is a 165-amino-acid chain: Zinc finger C2H2 protein ECU11_0990 (165 aa).

Basic and acidic residues-rich tracts occupy residues 1-10 and 19-32; these read MEAESPKERV and DPER…DTSS. The disordered stretch occupies residues 1-38; the sequence is MEAESPKERVQGVSGESWDPERGVKEREDTSSKKGKGV. 2 C2H2-type zinc fingers span residues 103–125 and 136–158; these read FGCE…KAQH and LFCP…SRYH.

In Encephalitozoon cuniculi (strain GB-M1) (Microsporidian parasite), this protein is Zinc finger C2H2 protein ECU11_0990.